The chain runs to 224 residues: Cytidylate kinase (224 aa).

11–19 (GPAGAGKST) is an ATP binding site.

It belongs to the cytidylate kinase family. Type 1 subfamily.

It is found in the cytoplasm. It catalyses the reaction CMP + ATP = CDP + ADP. The enzyme catalyses dCMP + ATP = dCDP + ADP. The protein is Cytidylate kinase of Lysinibacillus sphaericus (strain C3-41).